Consider the following 27-residue polypeptide: Pyruvate dehydrogenase protein X component, mitochondrial (27 aa).

Residues 1 to 27 (FRLSPAARNILEKHSLDASQGTATGPR) are disordered. The 26-residue stretch at 2–27 (RLSPAARNILEKHSLDASQGTATGPR) folds into the Peripheral subunit-binding (PSBD) domain. Lysine 13 bears the N6-acetyllysine mark. Phosphoserine is present on serine 15. Over residues 17–27 (DASQGTATGPR) the composition is skewed to polar residues.

Belongs to the 2-oxoacid dehydrogenase family. As to quaternary structure, part of the inner core of the multimeric pyruvate dehydrogenase complex that is composed of about 48 DLAT and 12 PDHX molecules. This core binds multiple copies of pyruvate dehydrogenase (subunits PDH1A and PDHB, E1), dihydrolipoamide acetyltransferase (DLAT, E2) and lipoamide dehydrogenase (DLD, E3). Interacts with SIRT4. Interacts with DLD.

It is found in the mitochondrion matrix. In terms of biological role, required for anchoring dihydrolipoamide dehydrogenase (E3) to the dihydrolipoamide transacetylase (E2) core of the pyruvate dehydrogenase complexes of eukaryotes. This specific binding is essential for a functional PDH complex. The sequence is that of Pyruvate dehydrogenase protein X component, mitochondrial from Mesocricetus auratus (Golden hamster).